The following is a 44-amino-acid chain: Thymosin beta-4 (44 aa).

Residues Met-1 to Glu-25 show a composition bias toward basic and acidic residues. The interval Met-1–Ser-44 is disordered. Ala-2 carries the post-translational modification N-acetylalanine. Position 4 is an N6-acetyllysine (Lys-4). Residue Lys-12 is modified to N6-acetyllysine; alternate. Residue Lys-12 forms a Glycyl lysine isopeptide (Lys-Gly) (interchain with G-Cter in SUMO2); alternate linkage. Thr-23 is modified (phosphothreonine). Lys-26 bears the N6-acetyllysine mark. Ser-31 is subject to Phosphoserine. Position 32 is an N6-acetyllysine (Lys-32). A compositionally biased stretch (basic and acidic residues) spans Glu-33 to Ser-44. Thr-34 is modified (phosphothreonine). Residue Lys-39 is modified to N6-acetyllysine.

Belongs to the thymosin beta family. As to expression, originally found in thymus but it is widely distributed in many tissues.

It is found in the cytoplasm. It localises to the cytoskeleton. In terms of biological role, plays an important role in the organization of the cytoskeleton. Binds to and sequesters actin monomers (G actin) and therefore inhibits actin polymerization. Seraspenide inhibits the entry of hematopoietic pluripotent stem cells into the S-phase. This chain is Thymosin beta-4 (TMSB4), found in Oryctolagus cuniculus (Rabbit).